A 344-amino-acid polypeptide reads, in one-letter code: Hyoscyamine 6-dioxygenase (344 aa).

The 101-residue stretch at 193–293 (QIQMMLTNYY…RVSIATLIGP (101 aa)) folds into the Fe2OG dioxygenase domain. Positions 217, 219, and 274 each coordinate Fe cation. 2-oxoglutarate is bound at residue R284.

It belongs to the iron/ascorbate-dependent oxidoreductase family. As to quaternary structure, monomer. Fe(2+) serves as cofactor. It depends on L-ascorbate as a cofactor. Post-translationally, the N-terminus is blocked. Root.

It catalyses the reaction L-hyoscyamine + 2-oxoglutarate + O2 = (6S)-6-hydroxyhyoscyamine + succinate + CO2. Its pathway is alkaloid biosynthesis; scopolamine biosynthesis. The polypeptide is Hyoscyamine 6-dioxygenase (H6H) (Hyoscyamus niger (Black henbane)).